The sequence spans 161 residues: Phosphopantetheine adenylyltransferase (161 aa).

Position 9 (serine 9) interacts with substrate. ATP-binding positions include 9 to 10 (SF) and histidine 17. 3 residues coordinate substrate: lysine 41, leucine 73, and lysine 87. ATP is bound by residues 88–90 (GLR), glutamate 98, and 122–128 (FSFLSSS).

This sequence belongs to the bacterial CoaD family. Homohexamer. It depends on Mg(2+) as a cofactor.

It localises to the cytoplasm. It catalyses the reaction (R)-4'-phosphopantetheine + ATP + H(+) = 3'-dephospho-CoA + diphosphate. The protein operates within cofactor biosynthesis; coenzyme A biosynthesis; CoA from (R)-pantothenate: step 4/5. Its function is as follows. Reversibly transfers an adenylyl group from ATP to 4'-phosphopantetheine, yielding dephospho-CoA (dPCoA) and pyrophosphate. This Nocardia farcinica (strain IFM 10152) protein is Phosphopantetheine adenylyltransferase.